A 256-amino-acid chain; its full sequence is Imidazole glycerol phosphate synthase subunit HisF (256 aa).

Residues aspartate 13 and aspartate 132 contribute to the active site.

The protein belongs to the HisA/HisF family. As to quaternary structure, heterodimer of HisH and HisF.

Its subcellular location is the cytoplasm. The enzyme catalyses 5-[(5-phospho-1-deoxy-D-ribulos-1-ylimino)methylamino]-1-(5-phospho-beta-D-ribosyl)imidazole-4-carboxamide + L-glutamine = D-erythro-1-(imidazol-4-yl)glycerol 3-phosphate + 5-amino-1-(5-phospho-beta-D-ribosyl)imidazole-4-carboxamide + L-glutamate + H(+). Its pathway is amino-acid biosynthesis; L-histidine biosynthesis; L-histidine from 5-phospho-alpha-D-ribose 1-diphosphate: step 5/9. Functionally, IGPS catalyzes the conversion of PRFAR and glutamine to IGP, AICAR and glutamate. The HisF subunit catalyzes the cyclization activity that produces IGP and AICAR from PRFAR using the ammonia provided by the HisH subunit. This is Imidazole glycerol phosphate synthase subunit HisF from Leptospira borgpetersenii serovar Hardjo-bovis (strain JB197).